The sequence spans 155 residues: Aspartate carbamoyltransferase regulatory chain (155 aa).

4 residues coordinate Zn(2+): Cys110, Cys115, Cys139, and Cys142.

Belongs to the PyrI family. As to quaternary structure, contains catalytic and regulatory chains. Zn(2+) is required as a cofactor.

Its function is as follows. Involved in allosteric regulation of aspartate carbamoyltransferase. In Yersinia pseudotuberculosis serotype IB (strain PB1/+), this protein is Aspartate carbamoyltransferase regulatory chain.